Here is a 402-residue protein sequence, read N- to C-terminus: CD2 homolog (402 aa).

The N-terminal stretch at 1-16 (MIIIVIFLMCLKIVLN) is a signal peptide. At 17–204 (NIIIWSTLNQ…ILKYQNYLST (188 aa)) the chain is on the extracellular side. N-linked (GlcNAc...) asparagine; by host glycosylation is found at Asn25, Asn37, Asn52, Asn55, Asn72, Asn77, Asn81, Asn89, Asn95, Asn108, Asn125, Asn137, Asn148, Asn153, Asn169, Asn177, Asn184, and Asn190. 2 disulfides stabilise this stretch: Cys126-Cys191 and Cys133-Cys174. A helical transmembrane segment spans residues 205-225 (LFYIIIFIVSGLIIGIFISII). The Cytoplasmic portion of the chain corresponds to 226 to 402 (SVLSIRRKRK…ISLIHVDRII (177 aa)). Positions 238 to 276 (VEEIESPPPSESNEEDISHDDTTSIHEPSPREPLLPKPY) are disordered. Residues 256 to 267 (HDDTTSIHEPSP) are compositionally biased toward basic and acidic residues. Tandem repeats lie at residues 302 to 307 (KPCPPP), 308 to 313 (KPCPPP), 314 to 319 (KPCPPP), 320 to 325 (KPCPPP), 326 to 331 (KPCSPP), 332 to 337 (KPCRPP), 338 to 343 (KPCPPP), 344 to 349 (KPCPPP), 350 to 355 (KPCPPP), 356 to 361 (KPCPPS), and 362 to 367 (KPCPSP). Residues 302–367 (KPCPPPKPCP…CPPSKPCPSP (66 aa)) are 11 X 6 AA tandem repeats of K-P-C-[PRS]-[P]-[PS]. Pro residues predominate over residues 319–386 (PKPCPPPKPC…PSIPLLPNIP (68 aa)). Positions 319-388 (PKPCPPPKPC…IPLLPNIPPL (70 aa)) are disordered.

This sequence belongs to the asfivirus CD2 homolog protein family. Both glycosylated and nonglycosylated forms interact (via C-terminus) with the host AP-1 complex. Cleaved into two fragments of 63 kDa and 26 kDa containing respectively the glycosylated N-terminus and the nonglycosylated C-terminus. A full-length 89-kDa glycosylated form also exists.

It localises to the host cell membrane. The protein localises to the virion membrane. Its subcellular location is the host Golgi apparatus. In terms of biological role, may play an immunosuppressive role by inhibiting lymphocyte proliferation and subsequently facilitating viral replication and generalization of infection. Responsible for viral hemadsorption, which may help viral spread. Increases virus replication in the tick vector at the step of virus uptake or replication in the tick gut. May play a role in the host Golgi reorganization to yield viral factories. May play a role in host cell penetration. The sequence is that of CD2 homolog from Ornithodoros (relapsing fever ticks).